The chain runs to 457 residues: Fibrinogen C domain-containing protein 1 (457 aa).

The disordered stretch occupies residues 1-20 (MGSDRWKNIGGAPQMEDSVQ). At 1 to 33 (MGSDRWKNIGGAPQMEDSVQDKSQRKGCGYILC) the chain is on the cytoplasmic side. The helical; Signal-anchor for type II membrane protein transmembrane segment at 34–54 (TVLLSVAVLLAVTVTGAVLFM) threads the bilayer. Topologically, residues 55–457 (NHYHAPSTEP…MKIRPQREEN (403 aa)) are extracellular. The tract at residues 211–235 (RPRVKADLQRAPSRSSRPRGCANGS) is disordered. The region spanning 231 to 454 (CANGSKPRDC…FTEMKIRPQR (224 aa)) is the Fibrinogen C-terminal domain. Residue Asn-233 is glycosylated (N-linked (GlcNAc...) asparagine). An intrachain disulfide couples Cys-240 to Cys-269. N-linked (GlcNAc...) asparagine glycosylation occurs at Asn-336. Residues Asp-389 and Asp-391 each contribute to the Ca(2+) site. Cys-397 and Cys-410 are disulfide-bonded.

Homotetramer; disulfide-linked.

The protein resides in the membrane. Functionally, acetyl group-binding receptor which shows a calcium-dependent binding to acetylated structures such as chitin, some N-acetylated carbohydrates, and amino acids. This chain is Fibrinogen C domain-containing protein 1 (fibcd1), found in Xenopus tropicalis (Western clawed frog).